Here is a 77-residue protein sequence, read N- to C-terminus: Large ribosomal subunit protein bL28 (77 aa).

This sequence belongs to the bacterial ribosomal protein bL28 family.

The chain is Large ribosomal subunit protein bL28 from Karelsulcia muelleri (strain GWSS) (Sulcia muelleri).